The chain runs to 195 residues: Holliday junction branch migration complex subunit RuvA (195 aa).

The interval 1–62 is domain I; that stretch reads MIEFVKGPVA…EDQQTLYGFR (62 aa). A domain II region spans residues 63-141; sequence SRRERELFNK…ELAPDYVPNE (79 aa). The flexible linker stretch occupies residues 141–145; the sequence is EGLFA. The interval 146-195 is domain III; that stretch reads QGASELDEACEALVALGYSEREIAKVRKALSGEILTTDAYIKRALQLLLK.

The protein belongs to the RuvA family. In terms of assembly, homotetramer. Forms an RuvA(8)-RuvB(12)-Holliday junction (HJ) complex. HJ DNA is sandwiched between 2 RuvA tetramers; dsDNA enters through RuvA and exits via RuvB. An RuvB hexamer assembles on each DNA strand where it exits the tetramer. Each RuvB hexamer is contacted by two RuvA subunits (via domain III) on 2 adjacent RuvB subunits; this complex drives branch migration. In the full resolvosome a probable DNA-RuvA(4)-RuvB(12)-RuvC(2) complex forms which resolves the HJ.

It is found in the cytoplasm. The RuvA-RuvB-RuvC complex processes Holliday junction (HJ) DNA during genetic recombination and DNA repair, while the RuvA-RuvB complex plays an important role in the rescue of blocked DNA replication forks via replication fork reversal (RFR). RuvA specifically binds to HJ cruciform DNA, conferring on it an open structure. The RuvB hexamer acts as an ATP-dependent pump, pulling dsDNA into and through the RuvAB complex. HJ branch migration allows RuvC to scan DNA until it finds its consensus sequence, where it cleaves and resolves the cruciform DNA. In Exiguobacterium sp. (strain ATCC BAA-1283 / AT1b), this protein is Holliday junction branch migration complex subunit RuvA.